The chain runs to 1135 residues: Retinoblastoma-like protein 2 (1135 aa).

A disordered region spans residues 1–43 (MASGGNQSPPPPPAAAASSEEEEEDGDAADRAQPAGSPSHQIQ). A Phosphoserine modification is found at Ser-410. Thr-414 bears the Phosphothreonine mark. Residues 414–613 (TPVSTAAHSL…DRIRDNENRV (200 aa)) are domain A. The segment at 414 to 1021 (TPVSTAAHSL…QAFAMKYSQA (608 aa)) is pocket; binds E1A. A glycan (O-linked (GlcNAc) serine) is linked at Ser-417. Residues 614 to 824 (PTCEEVMPPQ…PGQPLTSSSI (211 aa)) are spacer. Position 636 is a phosphoserine (Ser-636). Phosphothreonine is present on Thr-639. 8 positions are modified to phosphoserine: Ser-659, Ser-669, Ser-684, Ser-942, Ser-946, Ser-960, Ser-965, and Ser-967. Composition is skewed to polar residues over residues 661-674 (TTLY…TVST), 683-692 (DSPSEGSTSG), 935-950 (SGSS…PTEL), and 958-969 (DSSPVMRSNSTL). Disordered stretches follow at residues 661-698 (TTLY…PPQP) and 930-994 (GKRR…VEEE). A domain B region spans residues 825–1021 (RPRKTSSLAL…QAFAMKYSQA (197 aa)). Thr-968 bears the Phosphothreonine mark. Pro residues predominate over residues 971-981 (VPQPSSAPPTP). A phosphoserine mark is found at Ser-975 and Ser-976. Thr-980 bears the Phosphothreonine mark. A phosphoserine mark is found at Ser-1031, Ser-1064, Ser-1076, and Ser-1108.

Belongs to the retinoblastoma protein (RB) family. As to quaternary structure, interacts with AATF and RINT1. Component of the DREAM complex (also named LINC complex) at least composed of E2F4, E2F5, LIN9, LIN37, LIN52, LIN54, MYBL1, MYBL2, RBL1, RBL2, RBBP4, TFDP1 and TFDP2. The complex exists in quiescent cells where it represses cell cycle-dependent genes. It dissociates in S phase when LIN9, LIN37, LIN52 and LIN54 form a subcomplex that binds to MYBL2. Interacts with USP4. Interacts with KMT5B, KMT5C and USP4. Interacts with PML. Interacts with RBBP9. Interacts with CD53. Post-translationally, during G0 and early G1 phase of the cell cycle, phosphorylated on Ser-636 and on 5 sites within the domain B. Phosphorylation on Ser-669 in G1 leads to its ubiquitin-dependent proteolysis.

The protein localises to the nucleus. Functionally, key regulator of entry into cell division. Directly involved in heterochromatin formation by maintaining overall chromatin structure and, in particular, that of constitutive heterochromatin by stabilizing histone methylation. Recruits and targets histone methyltransferases KMT5B and KMT5C, leading to epigenetic transcriptional repression. Controls histone H4 'Lys-20' trimethylation. Probably acts as a transcription repressor by recruiting chromatin-modifying enzymes to promoters. Potent inhibitor of E2F-mediated trans-activation, associates preferentially with E2F5. Binds to cyclins A and E. Binds to and may be involved in the transforming capacity of the adenovirus E1A protein. May act as a tumor suppressor. The polypeptide is Retinoblastoma-like protein 2 (Rbl2) (Mus musculus (Mouse)).